Here is a 134-residue protein sequence, read N- to C-terminus: DNA-binding protein inhibitor ID-2 (134 aa).

Ser-14 and Ser-25 each carry phosphoserine. The bHLH domain occupies 23–75 (SRSKTPVDDPMSLLYNMNDCYSKLKELVPSIPQNKKVTKMEILQHVIDYILDL). An interaction with IFI204 region spans residues 30 to 83 (DDPMSLLYNMNDCYSKLKELVPSIPQNKKVTKMEILQHVIDYILDLQIALDSHP). Positions 106-115 (LNTDISILSL) match the Nuclear export signal motif.

Interacts with GATA4 and NKX2-5. Interacts with NR0B2. Interacts with CLOCK and BMAL1. Interacts with IFI204. Interacts with NEDD9/HEF1. Interacts with ASB4; this interaction promotes ID2 proteasomal degradation. Post-translationally, polyubiquitinated; which is favored by Ifi204 and leads to proteasomal degradation. Ubiquitinated in a ASB4-depedent manner, leading to proteasomal degradation. Phosphorylated in vitro by CDK1, PKA and PKC.

The protein resides in the cytoplasm. The protein localises to the nucleus. Functionally, transcriptional regulator (lacking a basic DNA binding domain) which negatively regulates the basic helix-loop-helix (bHLH) transcription factors by forming heterodimers and inhibiting their DNA binding and transcriptional activity. Implicated in regulating a variety of cellular processes, including cellular growth, senescence, differentiation, apoptosis, angiogenesis, and neoplastic transformation. Inhibits skeletal muscle and cardiac myocyte differentiation. Regulates the circadian clock by repressing the transcriptional activator activity of the CLOCK-BMAL1 heterodimer. Restricts the CLOCK and BMAL1 localization to the cytoplasm. Plays a role in both the input and output pathways of the circadian clock: in the input component, is involved in modulating the magnitude of photic entrainment and in the output component, contributes to the regulation of a variety of liver clock-controlled genes involved in lipid metabolism. This Mus musculus (Mouse) protein is DNA-binding protein inhibitor ID-2 (Id2).